The following is a 371-amino-acid chain: 4-hydroxybenzoate polyprenyltransferase, mitochondrial (371 aa).

The N-terminal 45 residues, 1–45 (MLGSCGAGLVRGLRAETQAWLWGTRGRSLALVHAARGLHAANWQP), are a transit peptide targeting the mitochondrion. At 46–83 (SPGQGPRGRPLSLSAAAVVNSAPRPLQPYLRLMRLDKP) the chain is on the mitochondrial matrix side. A helical membrane pass occupies residues 84–104 (IGTWLLYLPCTWSIGLAADPG). Residues 105 to 108 (CLPD) lie on the Mitochondrial intermembrane side of the membrane. A helical membrane pass occupies residues 109 to 129 (WYMLSLFGTGAVLMRGAGCTI). Over 130–171 (NDMWDRDYDKKVTRTASRPIAAGDISTFRSFVFLGGQLTLAL) the chain is Mitochondrial matrix. The helical transmembrane segment at 172 to 192 (GVLLCLNYYSIALGAASLLLV) threads the bilayer. At 193–200 (TTYPLMKR) the chain is on the mitochondrial intermembrane side. Residues 201 to 221 (ITYWPQLALGLTFNWGALLGW) traverse the membrane as a helical segment. The Mitochondrial matrix portion of the chain corresponds to 222–231 (SAVKGSCDPS). A helical transmembrane segment spans residues 232–252 (VCLPLYFSGIMWTLIYDTIYA). Residues 253–277 (HQDKKDDALIGLKSTALLFREDTKK) are Mitochondrial intermembrane-facing. Residues 278-298 (WLSGFSVAMLGALSLVGVNSG) traverse the membrane as a helical segment. Residues 299-300 (QT) lie on the Mitochondrial matrix side of the membrane. The chain crosses the membrane as a helical span at residues 301-321 (MPYYTALAAVGAHLAHQIYTL). The Mitochondrial intermembrane portion of the chain corresponds to 322 to 332 (DINRPEDCWEK). A helical membrane pass occupies residues 333–353 (FTSNRTIGLIIFLGIVLGNLC). At 354–371 (KAKETDKTRKNIENRMEN) the chain is on the mitochondrial matrix side.

Belongs to the UbiA prenyltransferase family. Mg(2+) is required as a cofactor.

The protein resides in the mitochondrion inner membrane. The enzyme catalyses an all-trans-polyprenyl diphosphate + 4-hydroxybenzoate = a 4-hydroxy-3-(all-trans-polyprenyl)benzoate + diphosphate. The catalysed reaction is all-trans-decaprenyl diphosphate + 4-hydroxybenzoate = 4-hydroxy-3-(all-trans-decaprenyl)benzoate + diphosphate. It carries out the reaction all-trans-nonaprenyl diphosphate + 4-hydroxybenzoate = 4-hydroxy-3-(all-trans-nonaprenyl)benzoate + diphosphate. The protein operates within cofactor biosynthesis; ubiquinone biosynthesis. Functionally, mediates the second step in the final reaction sequence of coenzyme Q (CoQ) biosynthesis. Catalyzes the prenylation of para-hydroxybenzoate (PHB) with an all-trans polyprenyl donor (such as all-trans-decaprenyl diphosphate). The length of the polyprenyl side chain varies depending on the species, in humans, the side chain is comprised of 10 isoprenyls (decaprenyl) producing CoQ10 (also known as ubiquinone), whereas rodents predominantly generate CoQ9. However, this specificity is not complete, human tissues have low amounts of CoQ9 and rodent organs contain some CoQ10. Plays a central role in the biosynthesis of CoQ10. CoQ10 is a vital molecule that transports electrons from mitochondrial respiratory chain complexes. CoQs also function as cofactors for uncoupling protein and play a role as regulators of the extracellularly-induced ceramide-dependent apoptotic pathway. Regulates mitochondrial permeability transition pore (mPTP) opening and ROS production (pivotal events in cell death) in a tissue specific manner. The polypeptide is 4-hydroxybenzoate polyprenyltransferase, mitochondrial (Bos taurus (Bovine)).